Here is a 113-residue protein sequence, read N- to C-terminus: MHEMSIAMSVIDAVTEKARQEGCSKVTGIELVVGHLSGVEVESLKFCFSAACRDTPADGAELVIEECEAVGRCEACGETFPITSFYAKCPSCAQFRVQIESGQELSVRSITIE.

His2 contributes to the Ni(2+) binding site. 4 residues coordinate Zn(2+): Cys73, Cys76, Cys89, and Cys92.

The protein belongs to the HypA/HybF family.

Functionally, involved in the maturation of [NiFe] hydrogenases. Required for nickel insertion into the metal center of the hydrogenase. This is Hydrogenase maturation factor HypA from Chlorobaculum parvum (strain DSM 263 / NCIMB 8327) (Chlorobium vibrioforme subsp. thiosulfatophilum).